The sequence spans 77 residues: Acyl carrier protein (77 aa).

One can recognise a Carrier domain in the interval 1–76 (MADFEKIKSI…DVIKFIDKLK (76 aa)). An O-(pantetheine 4'-phosphoryl)serine modification is found at serine 36.

Belongs to the acyl carrier protein (ACP) family. Post-translationally, 4'-phosphopantetheine is transferred from CoA to a specific serine of apo-ACP by AcpS. This modification is essential for activity because fatty acids are bound in thioester linkage to the sulfhydryl of the prosthetic group.

The protein resides in the cytoplasm. It participates in lipid metabolism; fatty acid biosynthesis. Its function is as follows. Carrier of the growing fatty acid chain in fatty acid biosynthesis. This Leptospira biflexa serovar Patoc (strain Patoc 1 / Ames) protein is Acyl carrier protein.